We begin with the raw amino-acid sequence, 623 residues long: Kelch repeat and BTB domain-containing protein 2 (623 aa).

The BTB domain occupies 31–98; the sequence is TDIVLIVEGT…AYTGNLAMND (68 aa). One can recognise a BACK domain in the interval 133 to 229; that stretch reads CVRLLSFADL…IRIDALSEVT (97 aa). Ser300 is subject to Phosphoserine. Kelch repeat units lie at residues 317-380, 381-429, 431-469, 470-529, and 535-581; these read DIYI…CCEG, YIYA…VVHD, IYVMTLNLMYCYFPRSDSWVEMAMRQTSRSFASAAAFGD, KIFY…RAVV, and CVFM…DFRC.

Component of the BCR(KBTBD2) E3 ubiquitin ligase complex, at least composed of CUL3, KBTBD2 and RBX1. Interacts (via the BTB domain) with CUL3.

It participates in protein modification; protein ubiquitination. Substrate-specific adapter of a BCR (BTB-CUL3-RBX1) E3 ubiquitin ligase complex that acts as a regulator of the insulin signaling pathway, modulating insulin sensitivity by limiting PIK3R1/p85alpha abundance in adipocytes. Targets PIK3R1, the regulatory subunit of phosphatidylinositol 3-kinase (PI3K), for 'Lys-48'-linked polyubiquitination and proteasome-mediated degradation. This Homo sapiens (Human) protein is Kelch repeat and BTB domain-containing protein 2.